The following is a 493-amino-acid chain: Catalase A (493 aa).

The disordered stretch occupies residues 1-24; sequence MKRKLTGLFGAPVSDRENSMTAGP. Catalysis depends on residues histidine 53 and asparagine 126. Tyrosine 336 contributes to the heme binding site.

The protein belongs to the catalase family. As to quaternary structure, homodimer. Heme is required as a cofactor.

It carries out the reaction 2 H2O2 = O2 + 2 H2O. Its function is as follows. Decomposes hydrogen peroxide into water and oxygen; serves to protect cells from the toxic effects of hydrogen peroxide. The polypeptide is Catalase A (katA) (Staphylococcus xylosus).